A 312-amino-acid chain; its full sequence is Methionyl-tRNA formyltransferase (312 aa).

Position 111–114 (Ser111–Pro114) interacts with (6S)-5,6,7,8-tetrahydrofolate.

Belongs to the Fmt family.

It catalyses the reaction L-methionyl-tRNA(fMet) + (6R)-10-formyltetrahydrofolate = N-formyl-L-methionyl-tRNA(fMet) + (6S)-5,6,7,8-tetrahydrofolate + H(+). Attaches a formyl group to the free amino group of methionyl-tRNA(fMet). The formyl group appears to play a dual role in the initiator identity of N-formylmethionyl-tRNA by promoting its recognition by IF2 and preventing the misappropriation of this tRNA by the elongation apparatus. This Myxococcus xanthus (strain DK1622) protein is Methionyl-tRNA formyltransferase.